Here is a 286-residue protein sequence, read N- to C-terminus: Ribosomal RNA small subunit methyltransferase A (286 aa).

6 residues coordinate S-adenosyl-L-methionine: asparagine 31, isoleucine 33, glycine 58, glutamate 80, aspartate 106, and asparagine 125.

The protein belongs to the class I-like SAM-binding methyltransferase superfamily. rRNA adenine N(6)-methyltransferase family. RsmA subfamily.

The protein localises to the cytoplasm. The catalysed reaction is adenosine(1518)/adenosine(1519) in 16S rRNA + 4 S-adenosyl-L-methionine = N(6)-dimethyladenosine(1518)/N(6)-dimethyladenosine(1519) in 16S rRNA + 4 S-adenosyl-L-homocysteine + 4 H(+). Functionally, specifically dimethylates two adjacent adenosines (A1518 and A1519) in the loop of a conserved hairpin near the 3'-end of 16S rRNA in the 30S particle. May play a critical role in biogenesis of 30S subunits. This is Ribosomal RNA small subunit methyltransferase A from Wolbachia pipientis wMel.